The following is a 501-amino-acid chain: Pyruvate kinase 1 (501 aa).

Residue arginine 50 coordinates substrate. Positions 52, 54, 85, and 86 each coordinate K(+). Residue 52 to 55 participates in ATP binding; sequence NFSH. Positions 92 and 178 each coordinate ATP. Glutamate 243 lines the Mg(2+) pocket. Substrate is bound by residues glycine 266, aspartate 267, and threonine 299. Aspartate 267 provides a ligand contact to Mg(2+).

The protein belongs to the pyruvate kinase family. Homotetramer. It depends on Mg(2+) as a cofactor. Requires K(+) as cofactor.

The enzyme catalyses pyruvate + ATP = phosphoenolpyruvate + ADP + H(+). The protein operates within carbohydrate degradation; glycolysis; pyruvate from D-glyceraldehyde 3-phosphate: step 5/5. This chain is Pyruvate kinase 1 (PYK1), found in Candida glabrata (strain ATCC 2001 / BCRC 20586 / JCM 3761 / NBRC 0622 / NRRL Y-65 / CBS 138) (Yeast).